Reading from the N-terminus, the 879-residue chain is JmjC domain-containing histone demethylation protein 1 (879 aa).

Disordered stretches follow at residues 1–45, 117–212, and 407–449; these read MSEQ…EEGK, STSP…PKRK, and KDVK…EGLK. The segment at 23 to 116 adopts a PHD-type zinc-finger fold; sequence PEPCPLCRET…KWYCAPCLAR (94 aa). Composition is skewed to basic and acidic residues over residues 183–192 and 407–433; these read IDMKSEREQQ and KDVKEKGRGNDSRESSEIRKEGSHLTE. The JmjC domain maps to 416-598; the sequence is NDSRESSEIR…TQLRLRQIEI (183 aa). A substrate-binding site is contributed by T472. Fe cation is bound by residues H475 and D477. Position 492 (K492) interacts with substrate. H566 is a Fe cation binding site. The tract at residues 763–879 is disordered; sequence HPPAWSENRQ…KVEEDMDIDH (117 aa). The segment covering 769–782 has biased composition (polar residues); it reads ENRQSPQIETTTVQ. Positions 786–818 are enriched in low complexity; the sequence is PSTSSSDAISGSGPGASPGASANGGANENEQAE. Residues 848–864 show a composition bias toward basic and acidic residues; the sequence is FVEKKTVWGPKLDKEKI.

This sequence belongs to the JHDM1 histone demethylase family. Fe(2+) serves as cofactor.

Its subcellular location is the nucleus. It catalyses the reaction N(6),N(6)-dimethyl-L-lysyl(36)-[histone H3] + 2 2-oxoglutarate + 2 O2 = L-lysyl(36)-[histone H3] + 2 formaldehyde + 2 succinate + 2 CO2. Histone demethylase that specifically demethylates 'Lys-36' of histone H3, thereby playing a central role in histone code. The chain is JmjC domain-containing histone demethylation protein 1 (JHD1) from Cryptococcus neoformans var. neoformans serotype D (strain B-3501A) (Filobasidiella neoformans).